We begin with the raw amino-acid sequence, 3291 residues long: Protocadherin-16 (3291 aa).

An N-terminal signal peptide occupies residues 1 to 35; that stretch reads MQEELSVALSCPGMKSLGTLLPLLVLLGTTVPGIR. At 36 to 2933 the chain is on the extracellular side; sequence GQAGSLDLQI…PDLNLLLVGA (2898 aa). Cadherin domains follow at residues 37–137, 138–249, 250–356, 369–466, 476–572, 573–679, 680–784, 785–888, 889–994, 995–1105, 1100–1205, 1218–1317, 1326–1429, 1430–1539, 1539–1642, 1643–1744, 1745–1848, 1849–1953, 1976–2061, 2062–2164, 2165–2270, 2270–2369, 2370–2475, 2476–2595, 2596–2699, 2700–2806, and 2807–2926; these read QAGS…APAF, PQAR…APAF, NQSR…QPSM, VSEA…APAF, LPEV…EPQF, QRTF…PPQF, YPRE…PPIF, EQLQ…SPAF, PAPE…APRF, DSPT…EPTF, SEEP…SPTF, IQVP…SPDL, VPVV…APAF, ARDP…APVF, FASP…APAF, PQQE…SPTF, GNTH…APAF, PVPS…APAF, LATL…GPRF, PRAN…APRF, LQPH…RPTI, IPQP…VPIF, SQSL…APSF, TLPH…PPVF, TRAS…GPAF, PLSL…DPVF, and LAPS…APDL. N-linked (GlcNAc...) asparagine glycosylation is present at N396. The interval 951–971 is disordered; that stretch reads GPPGGPPHELEVEAQDGGSPP. N-linked (GlcNAc...) asparagine glycosylation occurs at N1711. Residue N2354 is glycosylated (N-linked (GlcNAc...) asparagine). The N-linked (GlcNAc...) asparagine glycan is linked to N2562. A helical transmembrane segment spans residues 2934 to 2954; sequence VAASLGVVVVLALAALVLGLV. The Cytoplasmic portion of the chain corresponds to 2955-3291; it reads RARSRKAEAA…EPPDDTELRI (337 aa). Positions 2978–3033 are disordered; the sequence is SLQKLGREPPSPPPSEHLYHQTLPSYGGPGAGGPYPRGGSLDPSHSSGRGSAEAAE. A compositionally biased stretch (gly residues) spans 3004 to 3013; the sequence is GGPGAGGPYP. Residue S3048 is modified to Phosphoserine. Disordered stretches follow at residues 3051-3080 and 3226-3291; these read SSLAARGPDSGIQQDADGLSDTSCEPPAPD and ASHR…ELRI. Positions 3237–3259 are enriched in low complexity; sequence SLSSAAMSPSFSPSLSPLAARSP. Over residues 3270-3279 the composition is skewed to polar residues; the sequence is PSASALSTES.

In terms of assembly, heterophilic interaction with FAT4; this interaction affects their respective protein levels.

It is found in the cell membrane. Functionally, calcium-dependent cell-adhesion protein. Mediates functions in neuroprogenitor cell proliferation and differentiation. The polypeptide is Protocadherin-16 (Dchs1) (Rattus norvegicus (Rat)).